The chain runs to 299 residues: tRNA dimethylallyltransferase (299 aa).

11 to 18 (GPTAVGKT) contacts ATP. 13 to 18 (TAVGKT) contributes to the substrate binding site. Positions 36–39 (DSQQ) are interaction with substrate tRNA.

This sequence belongs to the IPP transferase family. Monomer. Mg(2+) serves as cofactor.

It carries out the reaction adenosine(37) in tRNA + dimethylallyl diphosphate = N(6)-dimethylallyladenosine(37) in tRNA + diphosphate. In terms of biological role, catalyzes the transfer of a dimethylallyl group onto the adenine at position 37 in tRNAs that read codons beginning with uridine, leading to the formation of N6-(dimethylallyl)adenosine (i(6)A). This chain is tRNA dimethylallyltransferase, found in Streptococcus pyogenes serotype M49 (strain NZ131).